The sequence spans 435 residues: Hyaluronidase-1 (435 aa).

The signal sequence occupies residues 1–21 (MAAHLLPICALFLTLLDMAQG). Cystine bridges form between C43-C333 and C207-C221. Residue N99 is glycosylated (N-linked (GlcNAc...) asparagine). The active-site Proton donor is the E131. N216 and N350 each carry an N-linked (GlcNAc...) asparagine glycan. Positions 354–430 (GALLCSQALC…YPGWQAPWCE (77 aa)) constitute an EGF-like domain. Intrachain disulfides connect C358-C369, C363-C418, and C420-C429.

This sequence belongs to the glycosyl hydrolase 56 family. In terms of tissue distribution, highly expressed in the liver, kidney and heart. Weakly expressed in lung, placenta and skeletal muscle. No expression detected in adult brain. Isoform 1 is expressed only in bladder and prostate cancer cells, G2/G3 bladder tumor tissues and lymph node specimens showing tumor invasive tumors cells. Isoform 3, isoform 4, isoform 5 and isoform 6 are expressed in normal bladder and bladder tumor tissues.

Its subcellular location is the secreted. The protein localises to the lysosome. The enzyme catalyses Random hydrolysis of (1-&gt;4)-linkages between N-acetyl-beta-D-glucosamine and D-glucuronate residues in hyaluronate.. In terms of biological role, may have a role in promoting tumor progression. May block the TGFB1-enhanced cell growth. This is Hyaluronidase-1 (HYAL1) from Homo sapiens (Human).